Reading from the N-terminus, the 60-residue chain is Large ribosomal subunit protein uL30 (60 aa).

This sequence belongs to the universal ribosomal protein uL30 family. As to quaternary structure, part of the 50S ribosomal subunit.

The polypeptide is Large ribosomal subunit protein uL30 (Streptomyces filamentosus (Streptomyces roseosporus)).